The following is a 282-amino-acid chain: MSSYANHQALAGLTLGKSTDYRDTYDASLLQGVPRSLNRDPLGLKADNLPFHGTDIWTLYELSWLNAKGLPQVAVGHVELDYTSVNLIESKSFKLYLNSFNQTRFNNWDEVRQTLERDLSTCAQGKVSVALYRLDELEGQPIGHFNGTCIDDQDITIDNDEFTTDYLENATSGEKVVEETLVSHLLKSNCLITHQPDWGSIQIQYRGRQIDREKLLRYLVSFRHHNEFHEQCVERIFNDLLRFCQPEKLSVYARYTRRGGLDINPWRSNNDFVPSTTRLVRQ.

Substrate is bound at residue 88–90 (IES). 90–91 (SK) serves as a coordination point for NADPH. C190 functions as the Thioimide intermediate in the catalytic mechanism. Residue D197 is the Proton donor of the active site. A substrate-binding site is contributed by 229–230 (HE). 258-259 (RG) serves as a coordination point for NADPH.

It belongs to the GTP cyclohydrolase I family. QueF type 2 subfamily. In terms of assembly, homodimer.

The protein localises to the cytoplasm. The catalysed reaction is 7-aminomethyl-7-carbaguanine + 2 NADP(+) = 7-cyano-7-deazaguanine + 2 NADPH + 3 H(+). Its pathway is tRNA modification; tRNA-queuosine biosynthesis. Its function is as follows. Catalyzes the NADPH-dependent reduction of 7-cyano-7-deazaguanine (preQ0) to 7-aminomethyl-7-deazaguanine (preQ1). The sequence is that of NADPH-dependent 7-cyano-7-deazaguanine reductase from Escherichia coli O127:H6 (strain E2348/69 / EPEC).